Consider the following 258-residue polypeptide: Acidic leucine-rich nuclear phosphoprotein 32 family member E (258 aa).

The residue at position 1 (M1) is an N-acetylmethionine. 4 LRR repeats span residues 18–38, 43–64, 65–87, and 89–110; these read EVTELVLDNCLCVNGEIEGLN, ELEFLSMANVELSSLARLPSLN, KLRKLELSDNIISGGLEVLAEKC, and NLTYLNLSGNKIKDLSTVEALQ. Residue K68 forms a Glycyl lysine isopeptide (Lys-Gly) (interchain with G-Cter in SUMO2) linkage. The LRRCT domain occupies 123–161; sequence CEITNLEDYRESIFELLQQITYLDGFDQEDNEAPDSEEE. Acidic residues-rich tracts occupy residues 149 to 206 and 216 to 238; these read DQED…EEEV and IQDEEDDDDYVDEGEEEEEEEEE. Residues 149-258 form a disordered region; that stretch reads DQEDNEAPDS…AEDDGEEDDD (110 aa). The segment at 205–258 is ZID domain; sequence EVGLSYLMKEEIQDEEDDDDYVDEGEEEEEEEEEGPRGEKRKRDAEDDGEEDDD. Basic and acidic residues predominate over residues 239–249; sequence GPRGEKRKRDA.

This sequence belongs to the ANP32 family. As to quaternary structure, component of a SWR1-like complex, composed of EP400, KAT5/TIP60, TRRAP, BRD8, RUVBL1, RUVBL2, ING3 and ANP32E; the complex does not contain SRCAP. Interacts with H2A.Z/H2AZ1. Interacts with the importin alpha KPNA1 and KPNA2. Phosphorylated. The phosphorylation is nuclear localization signal (NLS)-dependent.

It is found in the cytoplasm. It localises to the nucleus. In terms of biological role, histone chaperone that specifically mediates the genome-wide removal of histone H2A.Z/H2AZ1 from the nucleosome: removes H2A.Z/H2AZ1 from its normal sites of deposition, especially from enhancer and insulator regions. Not involved in deposition of H2A.Z/H2AZ1 in the nucleosome. May stabilize the evicted H2A.Z/H2AZ1-H2B dimer, thus shifting the equilibrium towards dissociation and the off-chromatin state. Inhibits activity of protein phosphatase 2A (PP2A). Does not inhibit protein phosphatase 1. May play a role in cerebellar development and synaptogenesis. In Rattus norvegicus (Rat), this protein is Acidic leucine-rich nuclear phosphoprotein 32 family member E (Anp32e).